Here is a 437-residue protein sequence, read N- to C-terminus: D-aminoacyl-tRNA deacylase (437 aa).

Belongs to the DtdA deacylase family. As to quaternary structure, monomer. Zn(2+) is required as a cofactor.

The enzyme catalyses a D-aminoacyl-tRNA + H2O = a tRNA + a D-alpha-amino acid + H(+). It catalyses the reaction glycyl-tRNA(Ala) + H2O = tRNA(Ala) + glycine + H(+). In terms of biological role, D-aminoacyl-tRNA deacylase with broad substrate specificity. By recycling D-aminoacyl-tRNA to D-amino acids and free tRNA molecules, this enzyme counteracts the toxicity associated with the formation of D-aminoacyl-tRNA entities in vivo. The protein is D-aminoacyl-tRNA deacylase of Methanoculleus marisnigri (strain ATCC 35101 / DSM 1498 / JR1).